Reading from the N-terminus, the 513-residue chain is Ribonuclease Y (513 aa).

Residues 6–26 (YIIIAVVIIIICVILGLYVVD) traverse the membrane as a helical segment. The KH domain maps to 203 to 288 (TVHVVNLPND…EMVEKAKKEV (86 aa)). The region spanning 329 to 422 (VLKHSIEVSH…VQAADAISAA (94 aa)) is the HD domain.

The protein belongs to the RNase Y family.

The protein resides in the cell membrane. Functionally, endoribonuclease that initiates mRNA decay. The chain is Ribonuclease Y from Clostridium botulinum (strain Langeland / NCTC 10281 / Type F).